The primary structure comprises 901 residues: HTH-type transcriptional regulator MalT (901 aa).

39–46 contributes to the ATP binding site; it reads SPAGYGKT. Residues 829–894 enclose the HTH luxR-type domain; that stretch reads ELIRTSPLTQ…DAVQHAQQLL (66 aa). Residues 853–872 constitute a DNA-binding region (H-T-H motif); it reads NEQIAGELAVAATTIKTHIR.

The protein belongs to the MalT family. Monomer in solution. Oligomerizes to an active state in the presence of the positive effectors ATP and maltotriose.

Its activity is regulated as follows. Activated by ATP and maltotriose, which are both required for DNA binding. In terms of biological role, positively regulates the transcription of the maltose regulon whose gene products are responsible for uptake and catabolism of malto-oligosaccharides. Specifically binds to the promoter region of its target genes, recognizing a short DNA motif called the MalT box. This chain is HTH-type transcriptional regulator MalT, found in Salmonella gallinarum (strain 287/91 / NCTC 13346).